A 335-amino-acid chain; its full sequence is Ornithine carbamoyltransferase 2, catabolic (335 aa).

Carbamoyl phosphate-binding positions include 62 to 65 (STRT), glutamine 89, arginine 113, and 140 to 143 (HPTQ). L-ornithine is bound by residues asparagine 172, aspartate 236, and 240–241 (SM). Residues 277–278 (CL) and arginine 322 each bind carbamoyl phosphate.

It belongs to the aspartate/ornithine carbamoyltransferase superfamily. OTCase family.

Its subcellular location is the cytoplasm. It catalyses the reaction carbamoyl phosphate + L-ornithine = L-citrulline + phosphate + H(+). Its pathway is amino-acid degradation; L-arginine degradation via ADI pathway; carbamoyl phosphate from L-arginine: step 2/2. Reversibly catalyzes the transfer of the carbamoyl group from carbamoyl phosphate (CP) to the N(epsilon) atom of ornithine (ORN) to produce L-citrulline. The polypeptide is Ornithine carbamoyltransferase 2, catabolic (arcB2) (Staphylococcus epidermidis (strain ATCC 12228 / FDA PCI 1200)).